A 151-amino-acid chain; its full sequence is UPF0756 membrane protein GWCH70_2680 (151 aa).

The next 4 helical transmembrane spans lie at 5–25, 53–73, 86–106, and 116–136; these read ILFLLILFIIGFIAKNQSLMI, WGVTVITIAVLAPIATGEIGF, WIALLSGIFVALVAKGGVTLL, and LVFGTIIAVSLFHGVAVGPLI.

The protein belongs to the UPF0756 family.

It is found in the cell membrane. The sequence is that of UPF0756 membrane protein GWCH70_2680 from Geobacillus sp. (strain WCH70).